Here is a 400-residue protein sequence, read N- to C-terminus: Diphosphomevalonate decarboxylase (400 aa).

At Ala-2 the chain carries N-acetylalanine. (R)-5-diphosphomevalonate is bound by residues 23 to 26, Arg-78, 156 to 161, and Thr-212; these read YWGK and SGSACR.

This sequence belongs to the diphosphomevalonate decarboxylase family. In terms of assembly, homodimer.

The protein resides in the cytoplasm. It carries out the reaction (R)-5-diphosphomevalonate + ATP = isopentenyl diphosphate + ADP + phosphate + CO2. It participates in steroid biosynthesis; cholesterol biosynthesis. Catalyzes the ATP dependent decarboxylation of (R)-5-diphosphomevalonate to form isopentenyl diphosphate (IPP). Functions in the mevalonate (MVA) pathway leading to isopentenyl diphosphate (IPP), a key precursor for the biosynthesis of isoprenoids and sterol synthesis. In Bos taurus (Bovine), this protein is Diphosphomevalonate decarboxylase (MVD).